Here is a 494-residue protein sequence, read N- to C-terminus: MLTSKGQGFLHGGLCLWLCVFTPFFKGCVGCATEERLFHKLFSHYNQFIRPVENVSDPVTVHFEVAITQLANVDEVNQIMETNLWLRHIWNDYKLRWDPMEYDGIETLRVPADKIWKPDIVLYNNAVGDFQVEGKTKALLKYNGMITWTPPAIFKSSCPMDITFFPFDHQNCSLKFGSWTYDKAEIDLLIIGSKVDMNDFWENSEWEIIDASGYKHDIKYNCCEEIYTDITYSFYIRRLPMFYTINLIIPCLFISFLTVLVFYLPSDCGEKVTLCISVLLSLTVFLLVITETIPSTSLVVPLVGEYLLFTMIFVTLSIVVTVFVLNIHYRTPTTHTMPRWVKTVFLKLLPQVLLMRWPLDKTRGTGSDAVPRGLARRPAKGKLASHGEPRHLKECFHCHKSNELATSKRRLSHQPLQWVVENSEHSPEVEDVINSVQFIAENMKSHNETKEVEDDWKYVAMVVDRVFLWVFIIVCVFGTAGLFLQPLLGNTGKS.

Residues 1–25 (MLTSKGQGFLHGGLCLWLCVFTPFF) form the signal peptide. At 26–239 (KGCVGCATEE…ITYSFYIRRL (214 aa)) the chain is on the extracellular side. 2 N-linked (GlcNAc...) asparagine glycosylation sites follow: N54 and N171. 2 disulfide bridges follow: C158–C172 and C222–C223. 3 helical membrane passes run 240-264 (PMFY…VFYL), 272-290 (VTLC…LVIT), and 306-327 (YLLF…VLNI). The Cytoplasmic segment spans residues 328–465 (HYRTPTTHTM…WKYVAMVVDR (138 aa)). Position 401 is a phosphoserine (S401). The helical transmembrane segment at 466–484 (VFLWVFIIVCVFGTAGLFL) threads the bilayer.

Belongs to the ligand-gated ion channel (TC 1.A.9) family. Acetylcholine receptor (TC 1.A.9.1) subfamily. Alpha-6/CHRNA6 sub-subfamily. As to quaternary structure, neuronal AChR is composed of two different types of subunits: alpha and non-alpha (beta). CHRNA6/alpha-6 subunit can be combined to CHRNB2/beta-2, CHRNA4/alpha-4 and CHRNB3/beta-3 to give rise to functional receptors. Heteropentamers containing CHRNB3 have an stoichiometry of (CHRNA6:CHRNB2)2:CHRNB3. Interacts with LYPD6.

Its subcellular location is the synaptic cell membrane. The enzyme catalyses Ca(2+)(in) = Ca(2+)(out). The catalysed reaction is K(+)(in) = K(+)(out). It carries out the reaction Na(+)(in) = Na(+)(out). Its activity is regulated as follows. Activated by a myriad of ligands such as acetylcholine, cytisine and nicotine. CHRNA6 nAChR activity is inhibited by the antagonists alpha-conotoxin MII and PIA, a small disulfide-constrained peptides from cone snails. Its function is as follows. Component of neuronal acetylcholine receptors (nAChRs) that function as pentameric, ligand-gated cation channels with high calcium permeability among other activities. nAChRs are excitatory neurotrasnmitter receptors formed by a collection of nAChR subunits known to mediate synaptic transmission in the nervous system and the neuromuscular junction. Each nAchR subunit confers differential attributes to channel properties, including activation, deactivation and desensitization kinetics, pH sensitivity, cation permeability, and binding to allosteric modulators. CHRNA6 forms pentameric channels with CHRNB2, CHRNB3 and CHRNA4 that exhibit high sensitivity to ACh and nicotine and are predominantly expressed in only a few brain areas, including dopaminergic neurons, norepirephrine neurons and cells of the visual system. nAChrs containing CHRNA6 subunits mediate endogenous cholinergic modulation of dopamine and gamma-aminobutyric acid (GABA) release in response to nicotine at nerve terminals. The chain is Neuronal acetylcholine receptor subunit alpha-6 from Homo sapiens (Human).